Here is a 100-residue protein sequence, read N- to C-terminus: Urease subunit gamma (100 aa).

This sequence belongs to the urease gamma subunit family. As to quaternary structure, heterotrimer of UreA (gamma), UreB (beta) and UreC (alpha) subunits. Three heterotrimers associate to form the active enzyme.

The protein resides in the cytoplasm. The enzyme catalyses urea + 2 H2O + H(+) = hydrogencarbonate + 2 NH4(+). It functions in the pathway nitrogen metabolism; urea degradation; CO(2) and NH(3) from urea (urease route): step 1/1. This chain is Urease subunit gamma, found in Synechococcus sp. (strain RCC307).